A 1003-amino-acid chain; its full sequence is Retinoblastoma-related protein 1 (1003 aa).

A domain A region spans residues Thr-405–Leu-607. The segment at Thr-405–Pro-860 is pocket. Residues Ala-608–Glu-729 are spacer. The domain B stretch occupies residues Thr-730–Pro-860. Residues Ala-868–Pro-899 are disordered.

It belongs to the retinoblastoma protein (RB) family. Expressed in roots, stems, leaves and flowers.

It localises to the nucleus. Regulator of biological processes that recruits a histone deacetylase to control gene transcription. Formation of stable complexes with geminiviridae replication-associated proteins may create a cellular environment which favors viral DNA replication. May play a role in the entry into mitosis, negatively regulating the cell proliferation during leaf, stem, and flower development. Critical regulator of the endocycle. The sequence is that of Retinoblastoma-related protein 1 (RBR1) from Nicotiana benthamiana.